Reading from the N-terminus, the 187-residue chain is Interferon beta (187 aa).

Positions 1 to 21 are cleaved as a signal peptide; it reads MTNKCLLQIALLLCFSTTALS. Tyr24 carries the phosphotyrosine modification. A disulfide bridge connects residues Cys52 and Cys162. N-linked (GlcNAc...) asparagine glycosylation occurs at Asn101.

The protein belongs to the alpha/beta interferon family. In terms of assembly, monomer.

The protein localises to the secreted. In terms of biological role, type I interferon cytokine that plays a key role in the innate immune response to infection, developing tumors and other inflammatory stimuli. Signals via binding to high-affinity (IFNAR2) and low-affinity (IFNAR1) heterodimeric receptor, activating the canonical Jak-STAT signaling pathway resulting in transcriptional activation or repression of interferon-regulated genes that encode the effectors of the interferon response, such as antiviral proteins, regulators of cell proliferation and differentiation, and immunoregulatory proteins. Signals mostly via binding to a IFNAR1-IFNAR2 heterodimeric receptor, but can also function with IFNAR1 alone and independently of Jak-STAT pathways. Elicits a wide variety of responses, including antiviral and antibacterial activities, and can regulate the development of B-cells, myelopoiesis and lipopolysaccharide (LPS)-inducible production of tumor necrosis factor. Plays a role in neuronal homeostasis by regulating dopamine turnover and protecting dopaminergic neurons: acts by promoting neuronal autophagy and alpha-synuclein clearance, thereby preventing dopaminergic neuron loss. IFNB1 is more potent than interferon-alpha (IFN-alpha) in inducing the apoptotic and antiproliferative pathways required for control of tumor cell growth. In Homo sapiens (Human), this protein is Interferon beta.